Consider the following 422-residue polypeptide: Alcohol dehydrogenase 4 (422 aa).

The N-terminal 29 residues, 1 to 29, are a transit peptide targeting the mitochondrion; sequence MSILRSPFRLIRSPARFFPSLFHSSCNQS. D82, N114, G141, S142, T181, T182, T190, F192, K203, and G225 together coordinate NAD(+). Positions 237, 241, and 306 each coordinate Fe(2+). NAD(+)-binding residues include H310 and H320. H320 is a Fe(2+) binding site.

It belongs to the iron-containing alcohol dehydrogenase family. Requires Zn(2+) as cofactor.

It localises to the mitochondrion matrix. The enzyme catalyses a primary alcohol + NAD(+) = an aldehyde + NADH + H(+). It catalyses the reaction a secondary alcohol + NAD(+) = a ketone + NADH + H(+). It carries out the reaction ethanol + NAD(+) = acetaldehyde + NADH + H(+). Its function is as follows. Involved in ethanol oxidation in mitochondria. This chain is Alcohol dehydrogenase 4 (adh4), found in Schizosaccharomyces pombe (strain 972 / ATCC 24843) (Fission yeast).